A 353-amino-acid polypeptide reads, in one-letter code: Methylthioribose-1-phosphate isomerase (353 aa).

The active-site Proton donor is the Asp-241.

It belongs to the eIF-2B alpha/beta/delta subunits family. MtnA subfamily.

The protein resides in the cytoplasm. It is found in the nucleus. The enzyme catalyses 5-(methylsulfanyl)-alpha-D-ribose 1-phosphate = 5-(methylsulfanyl)-D-ribulose 1-phosphate. It participates in amino-acid biosynthesis; L-methionine biosynthesis via salvage pathway; L-methionine from S-methyl-5-thio-alpha-D-ribose 1-phosphate: step 1/6. Functionally, catalyzes the interconversion of methylthioribose-1-phosphate (MTR-1-P) into methylthioribulose-1-phosphate (MTRu-1-P). This Danio rerio (Zebrafish) protein is Methylthioribose-1-phosphate isomerase (mri1).